The sequence spans 123 residues: Small ribosomal subunit protein uS12 (123 aa).

The interval Ala-9–Gly-32 is disordered. Position 89 is a 3-methylthioaspartic acid (Asp-89).

The protein belongs to the universal ribosomal protein uS12 family. Part of the 30S ribosomal subunit. Contacts proteins S8 and S17. May interact with IF1 in the 30S initiation complex.

With S4 and S5 plays an important role in translational accuracy. Functionally, interacts with and stabilizes bases of the 16S rRNA that are involved in tRNA selection in the A site and with the mRNA backbone. Located at the interface of the 30S and 50S subunits, it traverses the body of the 30S subunit contacting proteins on the other side and probably holding the rRNA structure together. The combined cluster of proteins S8, S12 and S17 appears to hold together the shoulder and platform of the 30S subunit. The sequence is that of Small ribosomal subunit protein uS12 from Bradyrhizobium sp. (strain BTAi1 / ATCC BAA-1182).